The sequence spans 389 residues: UDP-D-apiose/UDP-D-xylose synthase 1 (389 aa).

Residues F28, I29, D49, N76, I77, and L96 each coordinate NAD(+). UDP-alpha-D-glucuronate contacts are provided by Y105, T139, E141, R182, and Y185. Y185 and K189 together coordinate NAD(+). The active-site Proton acceptor is Y185. N214 provides a ligand contact to UDP-alpha-D-glucuronate. NAD(+) contacts are provided by W215 and R235. The UDP-alpha-D-glucuronate site is built by K251, V253, R260, Y331, Y335, D337, and R341.

This sequence belongs to the NAD(P)-dependent epimerase/dehydratase family. In terms of assembly, homodimer and heterodimer with AXS2. Requires NAD(+) as cofactor. Widely expressed with stronger expression in leaves and stems, and lower levels in flowers, siliques, pistils, pollen and roots.

Its subcellular location is the cytoplasm. It catalyses the reaction UDP-alpha-D-glucuronate + H(+) = UDP-alpha-D-xylose + CO2. The catalysed reaction is UDP-alpha-D-glucuronate + H(+) = UDP-alpha-D-apiose + CO2. Inhibited by UDP-D-galacturonate. In terms of biological role, together with AXS2, catalyzes the conversion of UDP-D-glucuronate into a mixture of UDP-D-apiose (UDP-Api) as the main product and UDP-D-xylose to a lesser extent, via a cycle of oxidation and reduction. D-Apiose (3-C-hydroxymethyl-d-erythrose) is the only plant cell wall monosaccharide with a branched carbon skeleton and is found in rhamnogalacturonan II (RG-II), apiogalacturonan, and several apioglycosides. The chain is UDP-D-apiose/UDP-D-xylose synthase 1 from Arabidopsis thaliana (Mouse-ear cress).